A 72-amino-acid polypeptide reads, in one-letter code: Tetrahydromethanopterin S-methyltransferase subunit G (72 aa).

The helical transmembrane segment at 48–68 (IGILYGGFIGLLLFLIYTVVS) threads the bilayer.

It belongs to the MtrG family. The complex is composed of 8 subunits; MtrA, MtrB, MtrC, MtrD, MtrE, MtrF, MtrG and MtrH.

Its subcellular location is the cell membrane. It carries out the reaction 5-methyl-5,6,7,8-tetrahydromethanopterin + coenzyme M + 2 Na(+)(in) = 5,6,7,8-tetrahydromethanopterin + methyl-coenzyme M + 2 Na(+)(out). The protein operates within one-carbon metabolism; methanogenesis from CO(2); methyl-coenzyme M from 5,10-methylene-5,6,7,8-tetrahydromethanopterin: step 2/2. Functionally, part of a complex that catalyzes the formation of methyl-coenzyme M and tetrahydromethanopterin from coenzyme M and methyl-tetrahydromethanopterin. This is an energy-conserving, sodium-ion translocating step. The protein is Tetrahydromethanopterin S-methyltransferase subunit G of Methanosarcina barkeri (strain Fusaro / DSM 804).